Consider the following 700-residue polypeptide: Elongation factor G (700 aa).

The tr-type G domain maps to 6–286 (HKVRNIGIMA…AVIDYLPSPL (281 aa)). Residues 15–22 (AHIDAGKT), 79–83 (DTPGH), and 133–136 (NKMD) contribute to the GTP site.

This sequence belongs to the TRAFAC class translation factor GTPase superfamily. Classic translation factor GTPase family. EF-G/EF-2 subfamily.

The protein localises to the cytoplasm. Its function is as follows. Catalyzes the GTP-dependent ribosomal translocation step during translation elongation. During this step, the ribosome changes from the pre-translocational (PRE) to the post-translocational (POST) state as the newly formed A-site-bound peptidyl-tRNA and P-site-bound deacylated tRNA move to the P and E sites, respectively. Catalyzes the coordinated movement of the two tRNA molecules, the mRNA and conformational changes in the ribosome. In Leifsonia xyli subsp. xyli (strain CTCB07), this protein is Elongation factor G.